Reading from the N-terminus, the 116-residue chain is Large ribosomal subunit protein bL19 (116 aa).

Belongs to the bacterial ribosomal protein bL19 family.

In terms of biological role, this protein is located at the 30S-50S ribosomal subunit interface and may play a role in the structure and function of the aminoacyl-tRNA binding site. This Ectopseudomonas mendocina (strain ymp) (Pseudomonas mendocina) protein is Large ribosomal subunit protein bL19.